Consider the following 81-residue polypeptide: Photosystem I iron-sulfur center (81 aa).

2 4Fe-4S ferredoxin-type domains span residues 2-31 (SHAV…MVPW) and 37-68 (GQIA…IRVY). Residues Cys-11, Cys-14, Cys-17, Cys-21, Cys-48, Cys-51, Cys-54, and Cys-58 each coordinate [4Fe-4S] cluster.

As to quaternary structure, the cyanobacterial PSI reaction center is composed of one copy each of PsaA,B,C,D,E,F,I,J,K,L,M and X, and forms trimeric complexes. The cofactor is [4Fe-4S] cluster.

The protein resides in the cellular thylakoid membrane. It catalyses the reaction reduced [plastocyanin] + hnu + oxidized [2Fe-2S]-[ferredoxin] = oxidized [plastocyanin] + reduced [2Fe-2S]-[ferredoxin]. In terms of biological role, apoprotein for the two 4Fe-4S centers FA and FB of photosystem I (PSI); essential for photochemical activity. FB is the terminal electron acceptor of PSI, donating electrons to ferredoxin. The C-terminus interacts with PsaA/B/D and helps assemble the protein into the PSI complex. Required for binding of PsaD and PsaE to PSI. PSI is a plastocyanin/cytochrome c6-ferredoxin oxidoreductase, converting photonic excitation into a charge separation, which transfers an electron from the donor P700 chlorophyll pair to the spectroscopically characterized acceptors A0, A1, FX, FA and FB in turn. This Prochlorococcus marinus subsp. pastoris (strain CCMP1986 / NIES-2087 / MED4) protein is Photosystem I iron-sulfur center.